Here is an 875-residue protein sequence, read N- to C-terminus: GATOR2 complex protein MIOS (875 aa).

7 WD repeats span residues 58 to 100 (SDTP…NSKF), 111 to 155 (KHAR…TPDI), 182 to 221 (GQND…QKMF), 223 to 261 (NTKA…KPVL), 265 to 306 (EQPK…TPIG), 320 to 360 (PCDN…SLAW), and 395 to 437 (RLRA…KQYT). Residues 735–781 (VSCNFCGKSISYSCSSVPHQGRGFSQYGVSGSPTKSKVTSCPGCRKP) form a C4-type zinc finger. Zn(2+) is bound by residues cysteine 737 and cysteine 740. Phosphoserine is present on residues serine 759 and serine 766. Residues cysteine 775, cysteine 778, cysteine 788, cysteine 827, cysteine 830, histidine 832, histidine 835, histidine 838, cysteine 849, cysteine 854, and cysteine 858 each coordinate Zn(2+). The RING-type; atypical zinc-finger motif lies at 782-863 (LPRCALCLIN…CTCKCMQLDT (82 aa)).

The protein belongs to the WD repeat mio family. As to quaternary structure, component of the GATOR2 subcomplex, composed of MIOS, SEC13, SEH1L, WDR24 and WDR59. The GATOR2 complex interacts with CASTOR1 and CASTOR2; the interaction is negatively regulated by arginine. CASTOR1 and CASTOR2 convey leucine availability via direct interaction with MIOS. The GATOR2 complex interacts with SESN1, SESN2 and SESN3; the interaction is negatively regulated by amino acids. Interacts with SAR1A and SAR1B; the interaction is direct, disrupted by leucine and mediates the interaction of SAR1A or SAR1B with the GATOR2 complex to negatively regulate the TORC1 signaling upon leucine deprivation. In terms of tissue distribution, widely expressed. In brain, expressed in neurons and glia (oligodendrocytes and astrocytes), with more abundance in neurons.

The protein localises to the lysosome membrane. Its activity is regulated as follows. The GATOR2 complex is negatively regulated by the upstream amino acid sensors CASTOR1 and SESN2, which sequester the GATOR2 complex in absence of amino acids. In the presence of abundant amino acids, GATOR2 is released from CASTOR1 and SESN2 and activated. In terms of biological role, as a component of the GATOR2 complex, functions as an activator of the amino acid-sensing branch of the mTORC1 signaling pathway. The GATOR2 complex indirectly activates mTORC1 through the inhibition of the GATOR1 subcomplex. GATOR2 probably acts as an E3 ubiquitin-protein ligase toward GATOR1. In the presence of abundant amino acids, the GATOR2 complex mediates ubiquitination of the NPRL2 core component of the GATOR1 complex, leading to GATOR1 inactivation. In the absence of amino acids, GATOR2 is inhibited, activating the GATOR1 complex. Within the GATOR2 complex, MIOS is required to prevent autoubiquitination of WDR24, the catalytic subunit of the complex. The GATOR2 complex is required for brain myelination. The polypeptide is GATOR2 complex protein MIOS (Mus musculus (Mouse)).